The following is a 285-amino-acid chain: Aquaporin PIP2-5 (285 aa).

Helical transmembrane passes span 38-58 (AVIAEFVATLLFLYITVATVI) and 75-95 (CGGVGVLGIAWAFGGMIFILV). Residues 107–109 (NPA) carry the NPA 1 motif. The next 3 helical transmembrane spans lie at 126-146 (LLYIVAQCLGAICGVGLVKGF), 168-188 (GTGLAAEIIGTFVLVYTVFSA), and 202-222 (VLAPLPIGFAVFMVHLATIPI). Residues 228–230 (NPA) carry the NPA 2 motif. Residues 250-270 (IFWVGPFIGAAIAAAYHQYVL) form a helical membrane-spanning segment.

It belongs to the MIP/aquaporin (TC 1.A.8) family. PIP (TC 1.A.8.11) subfamily. As to quaternary structure, homomers. May interact with PIP1-2 to form heteromers. As to expression, specifically expressed in roots, in the exodermis, endodermis and xylem parenchyma. Polar localization to the external periclinal side of epidermal cells in root apices.

The protein localises to the cell membrane. In terms of biological role, water channel required to facilitate the transport of water across cell membrane. Its function is impaired by Hg(2+). May play a role in water uptake from the root surface. Active as homomers. Increased activity when heteromerization with PIP1-2. This Zea mays (Maize) protein is Aquaporin PIP2-5 (PIP2-5).